The chain runs to 200 residues: dITP/XTP pyrophosphatase (200 aa).

5 to 10 contributes to the substrate binding site; the sequence is TRNEGK. Asp-67 serves as the catalytic Proton acceptor. Asp-67 contributes to the Mg(2+) binding site. Substrate is bound by residues Ser-68, 151–154, Lys-174, and 179–180; these read FGYD and HR.

The protein belongs to the HAM1 NTPase family. As to quaternary structure, homodimer. Requires Mg(2+) as cofactor.

It carries out the reaction XTP + H2O = XMP + diphosphate + H(+). The catalysed reaction is dITP + H2O = dIMP + diphosphate + H(+). The enzyme catalyses ITP + H2O = IMP + diphosphate + H(+). In terms of biological role, pyrophosphatase that catalyzes the hydrolysis of nucleoside triphosphates to their monophosphate derivatives, with a high preference for the non-canonical purine nucleotides XTP (xanthosine triphosphate), dITP (deoxyinosine triphosphate) and ITP. Seems to function as a house-cleaning enzyme that removes non-canonical purine nucleotides from the nucleotide pool, thus preventing their incorporation into DNA/RNA and avoiding chromosomal lesions. This chain is dITP/XTP pyrophosphatase, found in Streptococcus pneumoniae serotype 4 (strain ATCC BAA-334 / TIGR4).